We begin with the raw amino-acid sequence, 111 residues long: MAKGGFPGGFNINNMIKQAQQMQEEIKKMQEELMQKTVEGTSGGGMVKAVANGRKELVSININPEVVDKDDVETLEDLVLAAVNQALRNAEEMIASEMAKITGGFNIPGLF.

The protein belongs to the YbaB/EbfC family. In terms of assembly, homodimer.

The protein resides in the cytoplasm. The protein localises to the nucleoid. Binds to DNA and alters its conformation. May be involved in regulation of gene expression, nucleoid organization and DNA protection. This is Nucleoid-associated protein TTE0040 from Caldanaerobacter subterraneus subsp. tengcongensis (strain DSM 15242 / JCM 11007 / NBRC 100824 / MB4) (Thermoanaerobacter tengcongensis).